Consider the following 271-residue polypeptide: ATP synthase subunit a (271 aa).

Helical transmembrane passes span F38 to A58, V100 to L120, D146 to I166, L211 to W231, and A242 to V262.

The protein belongs to the ATPase A chain family. In terms of assembly, F-type ATPases have 2 components, CF(1) - the catalytic core - and CF(0) - the membrane proton channel. CF(1) has five subunits: alpha(3), beta(3), gamma(1), delta(1), epsilon(1). CF(0) has three main subunits: a(1), b(2) and c(9-12). The alpha and beta chains form an alternating ring which encloses part of the gamma chain. CF(1) is attached to CF(0) by a central stalk formed by the gamma and epsilon chains, while a peripheral stalk is formed by the delta and b chains.

The protein resides in the cell inner membrane. Functionally, key component of the proton channel; it plays a direct role in the translocation of protons across the membrane. The sequence is that of ATP synthase subunit a from Klebsiella pneumoniae (strain 342).